Reading from the N-terminus, the 73-residue chain is Protein SlyX homolog (73 aa).

The protein belongs to the SlyX family.

The sequence is that of Protein SlyX homolog from Pasteurella multocida (strain Pm70).